Reading from the N-terminus, the 447-residue chain is Tektin-4 (447 aa).

Coiled coils occupy residues 322-348 (LRKT…DKEA) and 375-423 (FRLL…TNSL).

This sequence belongs to the tektin family. Microtubule inner protein component of sperm flagellar doublet microtubules. Ubiquitinated, leading to its degradation. Deubiquitinated by USP16, promoting its stability. Detected in testis, where it is weakly expressed in round spermatids, and strongly expressed in the flagellum of step 16 elongated spermatids (at protein level). Expressed in spermatozoa. In the sperm flagellum, localizes to the principal piece and midpiece (at protein level). Specifically expressed in testis; not detected in other tissues tested.

It localises to the cytoplasm. Its subcellular location is the cytoskeleton. The protein localises to the cilium axoneme. It is found in the flagellum axoneme. In terms of biological role, microtubule inner protein (MIP) part of the dynein-decorated doublet microtubules (DMTs) in cilia and flagellar axoneme. Forms filamentous polymers in the walls of ciliary and flagellar microtubules. Contributes to normal sperm motility. This is Tektin-4 (Tekt4) from Mus musculus (Mouse).